We begin with the raw amino-acid sequence, 332 residues long: Glycerol-3-phosphate dehydrogenase [NAD(P)+] (332 aa).

NADPH-binding residues include tryptophan 11, arginine 30, and lysine 108. Sn-glycerol 3-phosphate is bound by residues lysine 108, glycine 137, and serine 139. Alanine 141 is an NADPH binding site. Sn-glycerol 3-phosphate is bound by residues lysine 192, aspartate 245, serine 255, arginine 256, and asparagine 257. Catalysis depends on lysine 192, which acts as the Proton acceptor. Arginine 256 contacts NADPH. NADPH contacts are provided by valine 280 and glutamate 282.

This sequence belongs to the NAD-dependent glycerol-3-phosphate dehydrogenase family.

It is found in the cytoplasm. The enzyme catalyses sn-glycerol 3-phosphate + NAD(+) = dihydroxyacetone phosphate + NADH + H(+). The catalysed reaction is sn-glycerol 3-phosphate + NADP(+) = dihydroxyacetone phosphate + NADPH + H(+). It participates in membrane lipid metabolism; glycerophospholipid metabolism. Catalyzes the reduction of the glycolytic intermediate dihydroxyacetone phosphate (DHAP) to sn-glycerol 3-phosphate (G3P), the key precursor for phospholipid synthesis. The chain is Glycerol-3-phosphate dehydrogenase [NAD(P)+] from Burkholderia pseudomallei (strain 1710b).